Here is a 274-residue protein sequence, read N- to C-terminus: ATP synthase subunit delta (274 aa).

Belongs to the ATPase delta chain family. As to quaternary structure, F-type ATPases have 2 components, F(1) - the catalytic core - and F(0) - the membrane proton channel. F(1) has five subunits: alpha(3), beta(3), gamma(1), delta(1), epsilon(1). F(0) has three main subunits: a(1), b(2) and c(10-14). The alpha and beta chains form an alternating ring which encloses part of the gamma chain. F(1) is attached to F(0) by a central stalk formed by the gamma and epsilon chains, while a peripheral stalk is formed by the delta and b chains.

The protein resides in the cell membrane. Its function is as follows. F(1)F(0) ATP synthase produces ATP from ADP in the presence of a proton or sodium gradient. F-type ATPases consist of two structural domains, F(1) containing the extramembraneous catalytic core and F(0) containing the membrane proton channel, linked together by a central stalk and a peripheral stalk. During catalysis, ATP synthesis in the catalytic domain of F(1) is coupled via a rotary mechanism of the central stalk subunits to proton translocation. In terms of biological role, this protein is part of the stalk that links CF(0) to CF(1). It either transmits conformational changes from CF(0) to CF(1) or is implicated in proton conduction. This chain is ATP synthase subunit delta, found in Salinispora arenicola (strain CNS-205).